The primary structure comprises 117 residues: Toxin CSTX-12 (117 aa).

A signal peptide spans 1-20; it reads MKVLVICAVLFLTIFSNSSA. Positions 21-47 are excised as a propeptide; sequence ETEDDFLEDESFEADDVIPFLAREQVR. Intrachain disulfides connect C50–C65, C57–C74, C64–C95, and C76–C93. A propeptide spanning residues 82-87 is cleaved from the precursor; that stretch reads RSDTAR. At A116 the chain carries Alanine amide.

This sequence belongs to the neurotoxin 19 (CSTX) family. 12 subfamily. As to quaternary structure, heterodimer of A and B chains; disulfide-linked. Interacts with CSTX-1 (AC P81694), and with CSTX-9 (AC P58604). As to expression, expressed by the venom gland.

The protein localises to the secreted. Its subcellular location is the target cell membrane. Synergistic toxin that induces or increases a cytolytic effect when combined with CSTX-1 (AC P81694) or CSTX-9 (AC P58604). When alone, has a weak insecticidal activity, with an unknown molecular target. This is Toxin CSTX-12 from Cupiennius salei (American wandering spider).